Consider the following 352-residue polypeptide: Phospho-N-acetylmuramoyl-pentapeptide-transferase (352 aa).

The next 10 helical transmembrane spans lie at 10–30 (YMFF…ALFL), 67–87 (TMGG…CADL), 88–108 (NNFY…IGLV), 129–149 (LLSQ…MGIN), 159–179 (YALF…IISS), 191–211 (GLAT…LYLS), 227–247 (GLGE…GFLW), 255–275 (VFMG…LGIV), 280–300 (ILLL…ILQV), and 329–349 (KIIV…LISI).

This sequence belongs to the glycosyltransferase 4 family. MraY subfamily. The cofactor is Mg(2+).

The protein localises to the cell inner membrane. The catalysed reaction is UDP-N-acetyl-alpha-D-muramoyl-L-alanyl-gamma-D-glutamyl-meso-2,6-diaminopimeloyl-D-alanyl-D-alanine + di-trans,octa-cis-undecaprenyl phosphate = di-trans,octa-cis-undecaprenyl diphospho-N-acetyl-alpha-D-muramoyl-L-alanyl-D-glutamyl-meso-2,6-diaminopimeloyl-D-alanyl-D-alanine + UMP. It functions in the pathway cell wall biogenesis; peptidoglycan biosynthesis. In terms of biological role, catalyzes the initial step of the lipid cycle reactions in the biosynthesis of the cell wall peptidoglycan: transfers peptidoglycan precursor phospho-MurNAc-pentapeptide from UDP-MurNAc-pentapeptide onto the lipid carrier undecaprenyl phosphate, yielding undecaprenyl-pyrophosphoryl-MurNAc-pentapeptide, known as lipid I. The sequence is that of Phospho-N-acetylmuramoyl-pentapeptide-transferase from Campylobacter lari (strain RM2100 / D67 / ATCC BAA-1060).